The following is a 739-amino-acid chain: Nucleoprotein (739 aa).

Residues 1-25 form an oligomerization, N-terminal arm region; sequence MDSRPQKIWMAPSLTESDMDYHKIL. The tract at residues 26–405 is NP core; it reads TAGLSVQQGI…TLRKERLAKL (380 aa). The segment at 415–647 is disordered; sequence PKTSGHYDDD…DSDNTQSEHS (233 aa). 2 stretches are compositionally biased toward low complexity: residues 449-458 and 504-514; these read SQDTTIPDVV and KGGQQKNSQKG. The short motif at 562–567 is the Host PPP2R5C-binding motif element; the sequence is LTPINE. The span at 567–579 shows a compositional bias: acidic residues; it reads EEADPLDDADDET. Positions 606–611 match the VP30-binding motif motif; it reads PPAPVY. Over residues 611–638 the composition is skewed to basic and acidic residues; the sequence is YRDHSEKKELPQDEQQDQDHTQEARNQD.

It belongs to the filoviruses nucleoprotein family. As to quaternary structure, homooligomer. Homomultimerizes to form the nucleocapsid. Binds to viral genomic RNA. Interacts with VP35 and VP30 to form the nucleocapsid. Interacts with host PPP2R5C; this interaction leads to VP30 dephosphorylation and viral transcription. Interacts with VP24; this interaction facilitates nucleocapsid assembly and genome packaging. Interacts with matrix protein VP40; this interaction allows recruitment of the nucleocapsid into progeny virions. Interacts with host STAU1. Interacts with host NXF1 (via RNA-binding domain); this interaction recruits NXF1 to the inclusion bodies were viral replication takes place, probably to export viral mRNA-NXF1 complexes from these sites. Interacts with host CCDC92; this interaction sequesters NP in the host cytoplasm. Interacts with host TRIM14. In terms of processing, phosphorylated by host. O-glycosylated by host. Post-translationally, acetylated by host EP300 in vitro.

It localises to the virion. The protein localises to the host cytoplasm. Functionally, oligomerizes into helical capsid to encapsidate the viral genome, protecting it from nucleases and the cellular innate immune response. VP35 binds to and stabilizes monomeric NP, keeping it soluble. Upon virus replication, NP is recruited to bind cooperatively viral genomic RNA and VP35 is released. The encapsidated genomic RNA is termed the nucleocapsid and serves as template for transcription and replication. The nucleocapsid is helical with a pitch of 10.81 NP per turn and a diameter of about 22nm. Each NP binds to six nucleotides of viral genomic RNA, three being exposed to the solvant and three hidden into the nucleocapsid. Also recruits host PPP2R5C phosphatase to dephosphorylate VP30 and thereby promote viral transcription. Upon virion assembly and budding, NP binds to VP24 and possibly host STAU1. In Epomops franqueti (Franquet's epauletted fruit bat), this protein is Nucleoprotein (NP).